We begin with the raw amino-acid sequence, 697 residues long: DNA ligase (697 aa).

Residues 34–38 (DKTYD), 83–84 (SL), and E114 each bind NAD(+). K116 (N6-AMP-lysine intermediate) is an active-site residue. NAD(+)-binding residues include R137, E171, K315, and K339. 4 residues coordinate Zn(2+): C430, C433, C448, and C453. One can recognise a BRCT domain in the interval 616–697 (KKSSKLNNLN…FHNLLKEENA (82 aa)).

This sequence belongs to the NAD-dependent DNA ligase family. LigA subfamily. Mg(2+) serves as cofactor. Mn(2+) is required as a cofactor.

It carries out the reaction NAD(+) + (deoxyribonucleotide)n-3'-hydroxyl + 5'-phospho-(deoxyribonucleotide)m = (deoxyribonucleotide)n+m + AMP + beta-nicotinamide D-nucleotide.. Functionally, DNA ligase that catalyzes the formation of phosphodiester linkages between 5'-phosphoryl and 3'-hydroxyl groups in double-stranded DNA using NAD as a coenzyme and as the energy source for the reaction. It is essential for DNA replication and repair of damaged DNA. In Mycoplasmopsis synoviae (strain 53) (Mycoplasma synoviae), this protein is DNA ligase.